A 355-amino-acid polypeptide reads, in one-letter code: Ribosomal RNA small subunit methyltransferase H (355 aa).

Residues 47-49 (GGY), aspartate 65, phenylalanine 92, aspartate 113, and glutamine 120 each bind S-adenosyl-L-methionine. Positions 332–355 (LLPLATLPETSHPKSASHSKSRRR) are disordered. Residues 346–355 (SASHSKSRRR) show a composition bias toward basic residues.

Belongs to the methyltransferase superfamily. RsmH family.

The protein localises to the cytoplasm. It carries out the reaction cytidine(1402) in 16S rRNA + S-adenosyl-L-methionine = N(4)-methylcytidine(1402) in 16S rRNA + S-adenosyl-L-homocysteine + H(+). Functionally, specifically methylates the N4 position of cytidine in position 1402 (C1402) of 16S rRNA. The sequence is that of Ribosomal RNA small subunit methyltransferase H from Beijerinckia indica subsp. indica (strain ATCC 9039 / DSM 1715 / NCIMB 8712).